The primary structure comprises 189 residues: FAS1 domain-containing protein mug57 (189 aa).

A signal peptide spans 1 to 24 (MMKLFCLNIFRFLYTTSFISAVLS). Residues 37 to 182 (EPRLFELLAE…GEMWVLNATL (146 aa)) enclose the FAS1 domain.

The protein resides in the cytoplasm. It localises to the nucleus. Its subcellular location is the membrane. Functionally, has a role in sporulation. This is FAS1 domain-containing protein mug57 (mug57) from Schizosaccharomyces pombe (strain 972 / ATCC 24843) (Fission yeast).